Here is a 326-residue protein sequence, read N- to C-terminus: Undecaprenyl-phosphate 4-deoxy-4-formamido-L-arabinose transferase (326 aa).

The next 2 helical transmembrane spans lie at methionine 235–isoleucine 255 and valine 270–leucine 290.

This sequence belongs to the glycosyltransferase 2 family.

It is found in the cell inner membrane. The enzyme catalyses UDP-4-deoxy-4-formamido-beta-L-arabinose + di-trans,octa-cis-undecaprenyl phosphate = 4-deoxy-4-formamido-alpha-L-arabinopyranosyl di-trans,octa-cis-undecaprenyl phosphate + UDP. It participates in glycolipid biosynthesis; 4-amino-4-deoxy-alpha-L-arabinose undecaprenyl phosphate biosynthesis; 4-amino-4-deoxy-alpha-L-arabinose undecaprenyl phosphate from UDP-4-deoxy-4-formamido-beta-L-arabinose and undecaprenyl phosphate: step 1/2. The protein operates within bacterial outer membrane biogenesis; lipopolysaccharide biosynthesis. Functionally, catalyzes the transfer of 4-deoxy-4-formamido-L-arabinose from UDP to undecaprenyl phosphate. The modified arabinose is attached to lipid A and is required for resistance to polymyxin and cationic antimicrobial peptides. The polypeptide is Undecaprenyl-phosphate 4-deoxy-4-formamido-L-arabinose transferase (Sodalis glossinidius (strain morsitans)).